Consider the following 237-residue polypeptide: LexA repressor (237 aa).

The segment at residues 26–46 (FDEMKDALDLRSKSGIHRLIT) is a DNA-binding region (H-T-H motif). Residues Ser158 and Lys196 each act as for autocatalytic cleavage activity in the active site.

This sequence belongs to the peptidase S24 family. In terms of assembly, homodimer.

It catalyses the reaction Hydrolysis of Ala-|-Gly bond in repressor LexA.. In terms of biological role, represses a number of genes involved in the response to DNA damage (SOS response), including recA and lexA. In the presence of single-stranded DNA, RecA interacts with LexA causing an autocatalytic cleavage which disrupts the DNA-binding part of LexA, leading to derepression of the SOS regulon and eventually DNA repair. The polypeptide is LexA repressor (Rhodopseudomonas palustris (strain BisB18)).